A 342-amino-acid polypeptide reads, in one-letter code: Dof zinc finger protein DOF4.6 (342 aa).

Positions 21 to 54 (NTCPKPQPQPLQPQQPPSVGGERKARPEKDQAVN) are disordered. The segment covering 25–36 (KPQPQPLQPQQP) has biased composition (pro residues). Residues 41–51 (GERKARPEKDQ) show a composition bias toward basic and acidic residues. The Dof-type zinc-finger motif lies at 53 to 107 (VNCPRCNSTNTKFCYYNNYSLTQPRYFCKGCRRYWTEGGSLRNIPVGGGSRKNKR). The Zn(2+) site is built by C55, C58, C80, and C83. Positions 94 to 136 (RNIPVGGGSRKNKRSHSSSSDISNNHSDSTQPATKKHLSDHHH) are disordered. Over residues 110–122 (SSSSDISNNHSDS) the composition is skewed to low complexity. Positions 127–136 (TKKHLSDHHH) are enriched in basic residues.

In terms of tissue distribution, accumulates in the stele.

The protein localises to the nucleus. Its function is as follows. Transcription factor that binds specifically to a 5'-AA[AG]G-3' consensus core sequence. The sequence is that of Dof zinc finger protein DOF4.6 from Arabidopsis thaliana (Mouse-ear cress).